We begin with the raw amino-acid sequence, 215 residues long: Large ribosomal subunit protein bL25 (215 aa).

The disordered stretch occupies residues 190-215 (VLTDAEEETDETPEEPEAIRQKGDEE). Over residues 193-205 (DAEEETDETPEEP) the composition is skewed to acidic residues. Over residues 206–215 (EAIRQKGDEE) the composition is skewed to basic and acidic residues.

This sequence belongs to the bacterial ribosomal protein bL25 family. CTC subfamily. Part of the 50S ribosomal subunit; part of the 5S rRNA/L5/L18/L25 subcomplex. Contacts the 5S rRNA. Binds to the 5S rRNA independently of L5 and L18.

Its function is as follows. This is one of the proteins that binds to the 5S RNA in the ribosome where it forms part of the central protuberance. The sequence is that of Large ribosomal subunit protein bL25 from Maricaulis maris (strain MCS10) (Caulobacter maris).